The sequence spans 323 residues: tRNA-modifying protein YgfZ (323 aa).

Positions 29 and 182 each coordinate folate.

Belongs to the tRNA-modifying YgfZ family.

Its subcellular location is the cytoplasm. Functionally, folate-binding protein involved in regulating the level of ATP-DnaA and in the modification of some tRNAs. It is probably a key factor in regulatory networks that act via tRNA modification, such as initiation of chromosomal replication. The chain is tRNA-modifying protein YgfZ from Vibrio atlanticus (strain LGP32) (Vibrio splendidus (strain Mel32)).